A 342-amino-acid chain; its full sequence is uncharacterized protein (342 aa).

3 helical membrane passes run 35-55, 134-154, and 161-180; these read YFRVSLVLLTLLIISLVWCFS, LLFLPSSVLSLSLIFSLIIYF, and LFITRCNSTLYLFNIYYCFS. Disordered stretches follow at residues 198-220 and 311-342; these read SSDNYSNYQQQPQQQPQQQQQYN and IINNNNNNNNNNNINNSAYSNFNNSNGYNYTN.

It is found in the membrane. This is an uncharacterized protein from Dictyostelium discoideum (Social amoeba).